The sequence spans 301 residues: ATP synthase gamma chain (301 aa).

This sequence belongs to the ATPase gamma chain family. F-type ATPases have 2 components, CF(1) - the catalytic core - and CF(0) - the membrane proton channel. CF(1) has five subunits: alpha(3), beta(3), gamma(1), delta(1), epsilon(1). CF(0) has three main subunits: a, b and c.

The protein resides in the cell inner membrane. Functionally, produces ATP from ADP in the presence of a proton gradient across the membrane. The gamma chain is believed to be important in regulating ATPase activity and the flow of protons through the CF(0) complex. This is ATP synthase gamma chain from Helicobacter pylori (strain J99 / ATCC 700824) (Campylobacter pylori J99).